The following is a 270-amino-acid chain: Orotidine 5'-phosphate decarboxylase (270 aa).

The active-site Proton donor is Lys-95.

It belongs to the OMP decarboxylase family. Type 2 subfamily.

It carries out the reaction orotidine 5'-phosphate + H(+) = UMP + CO2. It functions in the pathway pyrimidine metabolism; UMP biosynthesis via de novo pathway; UMP from orotate: step 2/2. This Azoarcus sp. (strain BH72) protein is Orotidine 5'-phosphate decarboxylase.